Here is a 420-residue protein sequence, read N- to C-terminus: MKIATLSIGDELIFGEVVDTNAAHISERLYSVGFKVQRQLTVGDNEQDIVEAIEMLAVKCDVVVVTGGLGPTVDDITARSAAKITGHELVLNEEALARLQRFSEKLGGNLHPSNEKQALMPANATLIPNPVGTACGFYLTHNGRFLFFLPGVPGEMACMLDETVIPFIVSRVKRRTFLQTKVFKVFGPSEAEVDALMDGVADEAAGVSVAFCVNFPEIQVKLRVEGHEEAVVAELLTRAGDKARQRLNGYVFAEDGETIDTVVASLFRETGFTLSLAESCTGGLVAKRITDIPGSSAYFLEGIVTYSNTAKTQLLDVPQRLLDEKGAVSSEVAVAMALGARKLSGSDIALAVTGIAGPDGGTAEKPVGTVYMALAGSNGCQAKRYTFHGDREEIRLITSFMAMDWLRKRLLSLRSAEVTD.

It belongs to the CinA family.

This is CinA-like protein from Geotalea uraniireducens (strain Rf4) (Geobacter uraniireducens).